The sequence spans 376 residues: Succinyl-diaminopimelate desuccinylase (376 aa).

His-67 is a Zn(2+) binding site. Asp-69 is an active-site residue. Asp-100 provides a ligand contact to Zn(2+). The active-site Proton acceptor is the Glu-134. Zn(2+)-binding residues include Glu-135, Glu-163, and His-349.

The protein belongs to the peptidase M20A family. DapE subfamily. In terms of assembly, homodimer. Zn(2+) is required as a cofactor. Co(2+) serves as cofactor.

The catalysed reaction is N-succinyl-(2S,6S)-2,6-diaminopimelate + H2O = (2S,6S)-2,6-diaminopimelate + succinate. It participates in amino-acid biosynthesis; L-lysine biosynthesis via DAP pathway; LL-2,6-diaminopimelate from (S)-tetrahydrodipicolinate (succinylase route): step 3/3. Its function is as follows. Catalyzes the hydrolysis of N-succinyl-L,L-diaminopimelic acid (SDAP), forming succinate and LL-2,6-diaminopimelate (DAP), an intermediate involved in the bacterial biosynthesis of lysine and meso-diaminopimelic acid, an essential component of bacterial cell walls. This chain is Succinyl-diaminopimelate desuccinylase, found in Xanthomonas campestris pv. campestris (strain B100).